A 369-amino-acid chain; its full sequence is D-alanine--D-alanine ligase (369 aa).

The 208-residue stretch at 152–359 (KKLFAAEGLP…YPSLLATMVE (208 aa)) folds into the ATP-grasp domain. 180 to 235 (RERLGLPVFVKPARGGSSIGVSRVSSWDELDAAVAAARDHDPKVIVEAAIAGRELE) contacts ATP. Mg(2+) contacts are provided by Asp314, Glu326, and Asn328.

This sequence belongs to the D-alanine--D-alanine ligase family. Requires Mg(2+) as cofactor. It depends on Mn(2+) as a cofactor.

It localises to the cytoplasm. The enzyme catalyses 2 D-alanine + ATP = D-alanyl-D-alanine + ADP + phosphate + H(+). It functions in the pathway cell wall biogenesis; peptidoglycan biosynthesis. Cell wall formation. This Mycolicibacterium paratuberculosis (strain ATCC BAA-968 / K-10) (Mycobacterium paratuberculosis) protein is D-alanine--D-alanine ligase.